The sequence spans 235 residues: MSKNSKAYKEAAEKVDKTRLYSPLEAAKLAKETSSKKQDATVEVAIRLGVDPRKADQMVRGTVNLPHGTGKTARVAVFAVGDKAEQAEAAGADIVGSDDLIEKIQGGFLDFDAAIATPDQMAKVGRIARILGPRGLMPNPKTGTVTPDVAKAVSDIKGGKINFRVDKQANLHFVIGKASFDESKLAENYGAALDEVLRAKPSSSKGRYLKKVVVSTTTGPGIPVDPSITRNFTEE.

The protein belongs to the universal ribosomal protein uL1 family. Part of the 50S ribosomal subunit.

Binds directly to 23S rRNA. The L1 stalk is quite mobile in the ribosome, and is involved in E site tRNA release. In terms of biological role, protein L1 is also a translational repressor protein, it controls the translation of the L11 operon by binding to its mRNA. The protein is Large ribosomal subunit protein uL1 of Mycolicibacterium vanbaalenii (strain DSM 7251 / JCM 13017 / BCRC 16820 / KCTC 9966 / NRRL B-24157 / PYR-1) (Mycobacterium vanbaalenii).